We begin with the raw amino-acid sequence, 843 residues long: Receptor-like serine/threonine-protein kinase SD1-7 (843 aa).

Positions 1–31 (MRSVPNYHHSFFIFLILILFLAFSVSPNTLS) are cleaved as a signal peptide. In terms of domain architecture, Bulb-type lectin spans 32-151 (ATESLTISSN…NNRLLWQSFD (120 aa)). Residues 32–435 (ATESLTISSN…LEDKRIKNEK (404 aa)) lie on the Extracellular side of the membrane. N41, N92, N116, N236, and N251 each carry an N-linked (GlcNAc...) asparagine glycan. Positions 286–322 (PKDLCDNYKVCGNFGYCDSNSLPNCYCIKGFKPVNEQ) constitute an EGF-like; atypical domain. Disulfide bonds link C290/C302, C296/C310, C372/C397, and C376/C382. The 82-residue stretch at 341-422 (CDGRDGFTRL…GGQDLYVRLA (82 aa)) folds into the PAN domain. N381 carries an N-linked (GlcNAc...) asparagine glycan. Residues 436 to 456 (IIGSSIGVSILLLLSFVIFHF) traverse the membrane as a helical segment. The Cytoplasmic segment spans residues 457–843 (WKRKQKRSIT…QITLSVIDAR (387 aa)). One can recognise a Protein kinase domain in the interval 519–809 (FSNDNKLGQG…AIPQPKRPGF (291 aa)). ATP contacts are provided by residues 525–533 (LGQGGFGIV) and K547. S553 is subject to Phosphoserine. Residues 608–625 (TRSSNLNWQKRFDIINGI) form a caM-binding region. D644 serves as the catalytic Proton acceptor. 2 positions are modified to phosphoserine: S648 and S661. T678 carries the phosphothreonine modification. S820 is modified (phosphoserine).

This sequence belongs to the protein kinase superfamily. Ser/Thr protein kinase family. Interacts with PUB9, PUB13, PUB14 and PUB38. Autophosphorylated on serine and threonine residues. Mostly expressed in leaves, and, to a lower extent, in stems and flower buds.

It localises to the cell membrane. The catalysed reaction is L-seryl-[protein] + ATP = O-phospho-L-seryl-[protein] + ADP + H(+). It carries out the reaction L-threonyl-[protein] + ATP = O-phospho-L-threonyl-[protein] + ADP + H(+). In terms of biological role, involved in the regulation of cellular expansion and differentiation. Mediates subcellular relocalization of PUB9 from nucleus to plasma membrane in a protein-phosphorylation-dependent manner. May be involved in the abscisic acid-mediated signaling pathway, at least during germination. The chain is Receptor-like serine/threonine-protein kinase SD1-7 (SD17) from Arabidopsis thaliana (Mouse-ear cress).